The following is a 410-amino-acid chain: E3 ubiquitin-protein ligase MARCHF4 (410 aa).

The first 18 residues, 1 to 18 (MLMPLCGLLWWWWCCCSG), serve as a signal peptide directing secretion. Residues 92 to 136 (GPREVVGREPPPVPPPPPLPPSSVEDDWGGPATEPPASLLSSASS) are disordered. Residues 100-112 (EPPPVPPPPPLPP) show a composition bias toward pro residues. Positions 126-136 (PPASLLSSASS) are enriched in low complexity. The segment at 155 to 215 (DSGMRTPLCR…ELCYYKYHVI (61 aa)) adopts an RING-CH-type zinc-finger fold. Zn(2+) is bound by residues C163, C166, C179, C181, H189, C192, C205, and C208. Transmembrane regions (helical) follow at residues 238–258 (VAAA…LIWS) and 272–292 (LFQI…GLII). 2 disordered regions span residues 324–372 (EDQK…SGPL) and 390–410 (PHEQ…VTTV). The segment covering 333–346 (NPRTSSSTQANIPS) has biased composition (polar residues). Residues 352 to 366 (AGTPAPEQGPAQAAG) are compositionally biased toward low complexity.

Expressed in brain and placenta.

It localises to the golgi apparatus membrane. It catalyses the reaction S-ubiquitinyl-[E2 ubiquitin-conjugating enzyme]-L-cysteine + [acceptor protein]-L-lysine = [E2 ubiquitin-conjugating enzyme]-L-cysteine + N(6)-ubiquitinyl-[acceptor protein]-L-lysine.. It participates in protein modification; protein ubiquitination. Its function is as follows. E3 ubiquitin-protein ligase that may mediate ubiquitination of MHC-I and CD4, and promote their subsequent endocytosis and sorting to lysosomes via multivesicular bodies. E3 ubiquitin ligases accept ubiquitin from an E2 ubiquitin-conjugating enzyme in the form of a thioester and then directly transfer the ubiquitin to targeted substrates. This Homo sapiens (Human) protein is E3 ubiquitin-protein ligase MARCHF4.